We begin with the raw amino-acid sequence, 342 residues long: AA9 family lytic polysaccharide monooxygenase AA9-X282 (342 aa).

Positions 1–18 are cleaved as a signal peptide; the sequence is MKSFASLLFLAATAAAHA. His17 is a binding site for Cu(2+). Phosphothreonine occurs at positions 19 and 57. The residue at position 59 (Ser59) is a Phosphoserine. Residues Cys63 and Cys181 are joined by a disulfide bond. His93 serves as a coordination point for Cu(2+). Residues His167 and Gln176 each contribute to the O2 site. Tyr178 provides a ligand contact to Cu(2+). An N-linked (GlcNAc...) asparagine glycan is attached at Asn189. Residues 233 to 263 are X282 extension; it reads SPATVANTPYPTTATWNTALQPTTVPTVTPP. Residues 281-302 form a disordered region; the sequence is VTSQPPVPPTTQQPPVVTPTAP. Positions 285–302 are enriched in pro residues; that stretch reads PPVPPTTQQPPVVTPTAP. One can recognise a CBM1 domain in the interval 306 to 342; that stretch reads PLQTQYGQCGGQGWNGPTQCQPPYTCTASNQWYHQCL.

Belongs to the polysaccharide monooxygenase AA9 family. Cu(2+) serves as cofactor.

It localises to the secreted. It catalyses the reaction [(1-&gt;4)-beta-D-glucosyl]n+m + reduced acceptor + O2 = 4-dehydro-beta-D-glucosyl-[(1-&gt;4)-beta-D-glucosyl]n-1 + [(1-&gt;4)-beta-D-glucosyl]m + acceptor + H2O.. In terms of biological role, lytic polysaccharide monooxygenase (LPMO) that depolymerizes crystalline and amorphous polysaccharides via the oxidation of scissile alpha- or beta-(1-4)-glycosidic bonds, yielding C1 oxidation products. Catalysis by LPMOs requires the reduction of the active-site copper from Cu(II) to Cu(I) by a reducing agent and H(2)O(2) or O(2) as a cosubstrate. Shows only weak binding properties to cellulose, and low cellulolytic oxidative activity which questions the involvement of X282 extension-containing AA9 proteins in the degradation of plant cell wall and opens new avenues as to the divergence of function of some AA9 members. In Coprinopsis cinerea (strain Okayama-7 / 130 / ATCC MYA-4618 / FGSC 9003) (Inky cap fungus), this protein is AA9 family lytic polysaccharide monooxygenase AA9-X282.